A 343-amino-acid chain; its full sequence is Ferrochelatase (343 aa).

Fe cation is bound by residues histidine 191 and glutamate 270.

It belongs to the ferrochelatase family.

The protein localises to the cytoplasm. The enzyme catalyses heme b + 2 H(+) = protoporphyrin IX + Fe(2+). Its pathway is porphyrin-containing compound metabolism; protoheme biosynthesis; protoheme from protoporphyrin-IX: step 1/1. Functionally, catalyzes the ferrous insertion into protoporphyrin IX. The sequence is that of Ferrochelatase from Phenylobacterium zucineum (strain HLK1).